A 92-amino-acid polypeptide reads, in one-letter code: CRISPR-associated endoribonuclease Cas2 1 (92 aa).

Mg(2+) is bound at residue aspartate 10.

This sequence belongs to the CRISPR-associated endoribonuclease Cas2 protein family. Homodimer, forms a heterotetramer with a Cas1 homodimer. Requires Mg(2+) as cofactor.

CRISPR (clustered regularly interspaced short palindromic repeat), is an adaptive immune system that provides protection against mobile genetic elements (viruses, transposable elements and conjugative plasmids). CRISPR clusters contain sequences complementary to antecedent mobile elements and target invading nucleic acids. CRISPR clusters are transcribed and processed into CRISPR RNA (crRNA). Functions as a ssRNA-specific endoribonuclease. Involved in the integration of spacer DNA into the CRISPR cassette. This Thermodesulfovibrio yellowstonii (strain ATCC 51303 / DSM 11347 / YP87) protein is CRISPR-associated endoribonuclease Cas2 1.